The chain runs to 120 residues: ATP-dependent Clp protease adapter protein ClpS (120 aa).

Positions 1-20 (MATKSPVNPKVPLVQEPDRD) are disordered.

It belongs to the ClpS family. Binds to the N-terminal domain of the chaperone ClpA.

In terms of biological role, involved in the modulation of the specificity of the ClpAP-mediated ATP-dependent protein degradation. The protein is ATP-dependent Clp protease adapter protein ClpS of Albidiferax ferrireducens (strain ATCC BAA-621 / DSM 15236 / T118) (Rhodoferax ferrireducens).